Consider the following 155-residue polypeptide: Regulatory protein RecX (155 aa).

Belongs to the RecX family.

The protein resides in the cytoplasm. In terms of biological role, modulates RecA activity. This Pseudomonas entomophila (strain L48) protein is Regulatory protein RecX.